Reading from the N-terminus, the 468-residue chain is Adenylosuccinate synthetase (468 aa).

GTP-binding positions include 23 to 29 (GDEGKGK) and 51 to 53 (GHE). Asp24 acts as the Proton acceptor in catalysis. Mg(2+)-binding residues include Asp24 and Gly51. IMP-binding positions include 24–27 (DEGK), 49–52 (NSGH), Thr142, Arg156, Asn238, Thr253, and Arg317. His52 acts as the Proton donor in catalysis. Position 313–319 (313–319 (VTTGRTR)) interacts with substrate. GTP is bound by residues Arg319 and 345 to 347 (KLD).

The protein belongs to the adenylosuccinate synthetase family. Homodimer. Mg(2+) serves as cofactor.

It localises to the cytoplasm. The catalysed reaction is IMP + L-aspartate + GTP = N(6)-(1,2-dicarboxyethyl)-AMP + GDP + phosphate + 2 H(+). It participates in purine metabolism; AMP biosynthesis via de novo pathway; AMP from IMP: step 1/2. Functionally, plays an important role in the salvage pathway for purine nucleotide biosynthesis. Catalyzes the first committed step in the biosynthesis of AMP from IMP. The polypeptide is Adenylosuccinate synthetase (Theileria annulata).